A 201-amino-acid chain; its full sequence is Lipopolysaccharide core heptose(II)-phosphate phosphatase (201 aa).

The N-terminal stretch at 1 to 33 is a signal peptide; the sequence is MLAFTLRFIKNKRYFAILAGALVIIAGLASQHA.

This sequence belongs to the phosphoglycerate mutase family. Ais subfamily.

It is found in the periplasm. It functions in the pathway bacterial outer membrane biogenesis; lipopolysaccharide metabolism. Functionally, catalyzes the dephosphorylation of heptose(II) of the outer membrane lipopolysaccharide core. This chain is Lipopolysaccharide core heptose(II)-phosphate phosphatase, found in Salmonella typhi.